Consider the following 449-residue polypeptide: MMLSTEGREGFVVKVRGLPWSCSADEVMRFFSDCKIQNGTSGIRFIYTREGRPSGEAFVELESEDEVKLALKKDRETMGHRYVEVFKSNSVEMDWVLKHTGPNSPDTANDGFVRLRGLPFGCSKEEIVQFFSGLEIVPNGMTLPVDFQGRSTGEAFVQFASQEIAEKALKKHKERIGHRYIEIFKSSRAEVRTHYDPPRKLMAMQRPGPYDRPGAGRGYNSIGRGAGFERMRRGAYGGGYGGYDDYGGYNDGYGFGSDRFGRDQNYCFSGMSDHRYGDGGSSFQSTTGHCVHMRGLPYRATENDIYNFFSPLNPMRVHIEIGPDGRVTGEADVEFATHEDAVAAMAKDKANMQHRYVELFLNSTAGTSGGAYDHSYVELFLNSTAGASGGAYGSQMMGGMGISNQSSYGGPASQQLSGGYGGGYGGQSSMSGYDQVLQENSSDYQSNLA.

Met-1 bears the N-acetylmethionine mark. N-acetylmethionine; in Heterogeneous nuclear ribonucleoprotein H2, N-terminally processed is present on Met-2. In terms of domain architecture, RRM 1 spans 11-90 (FVVKVRGLPW…RYVEVFKSNS (80 aa)). A Phosphoserine modification is found at Ser-23. Lys-35 is covalently cross-linked (Glycyl lysine isopeptide (Lys-Gly) (interchain with G-Cter in SUMO2)). Phosphoserine occurs at positions 54 and 63. A Glycyl lysine isopeptide (Lys-Gly) (interchain with G-Cter in SUMO2) cross-link involves residue Lys-87. Ser-90 is modified (phosphoserine). Lys-98 participates in a covalent cross-link: Glycyl lysine isopeptide (Lys-Gly) (interchain with G-Cter in SUMO2). The 78-residue stretch at 111–188 (GFVRLRGLPF…RYIEIFKSSR (78 aa)) folds into the RRM 2 domain. Arg-233 is modified (dimethylated arginine; alternate). Position 233 is an omega-N-methylarginine; alternate (Arg-233). Residues 234–249 (GAYGGGYGGYDDYGGY) form a 1-1 repeat. The 2 X 16 AA Gly-rich approximate repeats stretch occupies residues 234-433 (GAYGGGYGGY…YGGQSSMSGY (200 aa)). Position 246 is a phosphotyrosine (Tyr-246). Residues 289-364 (HCVHMRGLPY…RYVELFLNST (76 aa)) form the RRM 3 domain. Position 310 is a phosphoserine (Ser-310). 3 repeat units span residues 354–372 (HRYV…GGAY), 374–392 (HSYV…GGAY), and 418–433 (GGYG…MSGY). Residues 354-392 (HRYVELFLNSTAGTSGGAYDHSYVELFLNSTAGASGGAY) are 2 X 19 AA perfect repeats.

Component of a ribonucleoprotein complex containing mRNAs and RNA-binding proteins including DDX5, HNRNPH2 and SRSF1 as well as splicing regulator ARVCF. Interacts with TXNL4/DIM1.

Its subcellular location is the nucleus. It is found in the nucleoplasm. This protein is a component of the heterogeneous nuclear ribonucleoprotein (hnRNP) complexes which provide the substrate for the processing events that pre-mRNAs undergo before becoming functional, translatable mRNAs in the cytoplasm. Binds poly(RG). The protein is Heterogeneous nuclear ribonucleoprotein H2 (HNRNPH2) of Bos taurus (Bovine).